Consider the following 426-residue polypeptide: tRNA modification GTPase MnmE (426 aa).

(6S)-5-formyl-5,6,7,8-tetrahydrofolate contacts are provided by R20, E77, and M117. One can recognise a TrmE-type G domain in the interval 213-350; it reads GFEVAILGAP…LLTDIEGVLS (138 aa). N223 lines the K(+) pocket. GTP-binding positions include 223 to 228, 242 to 248, and 267 to 270; these read NAGKST, SDVPGTT, and DTAG. Residue S227 coordinates Mg(2+). 3 residues coordinate K(+): S242, V244, and T247. T248 provides a ligand contact to Mg(2+). K426 lines the (6S)-5-formyl-5,6,7,8-tetrahydrofolate pocket.

This sequence belongs to the TRAFAC class TrmE-Era-EngA-EngB-Septin-like GTPase superfamily. TrmE GTPase family. Homodimer. Heterotetramer of two MnmE and two MnmG subunits. K(+) is required as a cofactor.

The protein resides in the cytoplasm. Functionally, exhibits a very high intrinsic GTPase hydrolysis rate. Involved in the addition of a carboxymethylaminomethyl (cmnm) group at the wobble position (U34) of certain tRNAs, forming tRNA-cmnm(5)s(2)U34. The sequence is that of tRNA modification GTPase MnmE from Jannaschia sp. (strain CCS1).